The primary structure comprises 155 residues: Gastrin-releasing peptide (155 aa).

The signal sequence occupies residues 1 to 31; sequence MEGVLLFWKYRALFFLVLCSLVLCKVHLSQA. Met60 carries the methionine amide modification. Residues 128–155 constitute a propeptide that is removed on maturation; sequence FSGAEDNNLKEMLDYLYQMMNMKENTSS.

The protein belongs to the bombesin/neuromedin-B/ranatensin family. As to expression, brain and stomach. In the stomach GRP was localized, at the base of the gastric pits, to occasional cells whose distribution and appearance were consistent with that of gut neuroendocrine cells.

The protein resides in the secreted. Its subcellular location is the cytoplasmic vesicle. It localises to the secretory vesicle lumen. Its function is as follows. Stimulates the release of gastrin and other gastrointestinal hormones. This is Gastrin-releasing peptide (grp) from Bombina orientalis (Oriental fire-bellied toad).